The primary structure comprises 346 residues: Methionine import ATP-binding protein MetN 1 (346 aa).

Residues 2-241 (IELKNVSKVF…PQHVTTKKFV (240 aa)) enclose the ABC transporter domain. 38 to 45 (GYSGAGKS) contributes to the ATP binding site.

The protein belongs to the ABC transporter superfamily. Methionine importer (TC 3.A.1.24) family. In terms of assembly, the complex is composed of two ATP-binding proteins (MetN), two transmembrane proteins (MetI) and a solute-binding protein (MetQ).

The protein localises to the cell membrane. The enzyme catalyses L-methionine(out) + ATP + H2O = L-methionine(in) + ADP + phosphate + H(+). It carries out the reaction D-methionine(out) + ATP + H2O = D-methionine(in) + ADP + phosphate + H(+). In terms of biological role, part of the ABC transporter complex MetNIQ involved in methionine import. Responsible for energy coupling to the transport system. In Bacillus cereus (strain ATCC 10987 / NRS 248), this protein is Methionine import ATP-binding protein MetN 1.